The primary structure comprises 1192 residues: Plakophilin-4 (1192 aa).

Residues Met1–Glu31 form a disordered region. Positions Thr36–Arg70 form a coiled coil. Positions Ala73–Ser262 are disordered. Residue Ser75 is modified to Phosphoserine. The segment covering Ser77–Lys86 has biased composition (polar residues). Thr84 carries the post-translational modification Phosphothreonine. Phosphoserine is present on residues Ser106, Ser132, Ser136, and Ser139. 3 stretches are compositionally biased toward polar residues: residues Gly138–Gly156, Phe163–Val204, and Ser214–Val230. Phosphoserine occurs at positions 221, 231, and 236. A compositionally biased stretch (low complexity) spans Ser231–Gly242. 2 positions are modified to omega-N-methylarginine: Arg254 and Arg270. A phosphoserine mark is found at Ser273 and Ser281. The disordered stretch occupies residues Ser290 to Ala310. 3 positions are modified to phosphoserine: Ser314, Ser327, and Ser337. A disordered region spans residues Thr323–Gln348. Positions Val325–Pro338 are enriched in low complexity. Phosphotyrosine is present on Tyr372. A phosphoserine mark is found at Ser392, Ser403, and Ser406. At Thr412 the chain carries Phosphothreonine. Phosphotyrosine is present on Tyr415. An ARM 1 repeat occupies Tyr415–Arg455. Ser422, Ser427, and Ser438 each carry phosphoserine. Tyr478 bears the Phosphotyrosine mark. Residues Ser510, Ser512, and Ser515 each carry the phosphoserine modification. 5 ARM repeats span residues Lys518–Phe557, Asn560–Phe599, Asp604–Ser644, Leu660–Ser702, and Glu706–Tyr751. Positions Gly773–Glu782 are enriched in basic and acidic residues. The segment at Gly773–Gly810 is disordered. Ser776 bears the Phosphoserine mark. ARM repeat units lie at residues Pro815–Ala855, Ala862–Leu901, and Met950–Gln993. 2 positions are modified to phosphothreonine: Thr1013 and Thr1017. A Phosphoserine modification is found at Ser1045. Positions Pro1058 to Gly1086 are disordered. Residues Pro1067–Asp1077 are compositionally biased toward polar residues. Residues Ser1091, Ser1100, and Ser1135 each carry the phosphoserine modification.

It belongs to the beta-catenin family. In terms of assembly, interacts with PDZD2. Interacts (via the C-terminus) with FRMPD2 (via the PDZ 2 domain). Interacts with RHOA; the interaction is detected at the midbody. Interacts with ECT2; the interaction is detected at the midbody. Interacts with CCDC85B. Expressed in salivary glands (at protein level). Expressed in arrector pili muscle (at protein level).

The protein localises to the cell junction. It is found in the desmosome. The protein resides in the cytoplasm. It localises to the cytoskeleton. Its subcellular location is the spindle. The protein localises to the midbody. It is found in the cell membrane. Plays a role as a regulator of Rho activity during cytokinesis. May play a role in junctional plaques. The polypeptide is Plakophilin-4 (PKP4) (Homo sapiens (Human)).